Reading from the N-terminus, the 347-residue chain is Phosphoribosylformylglycinamidine cyclo-ligase (347 aa).

This sequence belongs to the AIR synthase family.

Its subcellular location is the cytoplasm. The catalysed reaction is 2-formamido-N(1)-(5-O-phospho-beta-D-ribosyl)acetamidine + ATP = 5-amino-1-(5-phospho-beta-D-ribosyl)imidazole + ADP + phosphate + H(+). It participates in purine metabolism; IMP biosynthesis via de novo pathway; 5-amino-1-(5-phospho-D-ribosyl)imidazole from N(2)-formyl-N(1)-(5-phospho-D-ribosyl)glycinamide: step 2/2. This is Phosphoribosylformylglycinamidine cyclo-ligase from Bacillus cytotoxicus (strain DSM 22905 / CIP 110041 / 391-98 / NVH 391-98).